Reading from the N-terminus, the 21-residue chain is Peptide PGLa-R6 (21 aa).

Leu21 is subject to Leucine amide.

Expressed by the skin glands.

It is found in the secreted. Its function is as follows. Antimicrobial peptide. This is Peptide PGLa-R6 from Xenopus ruwenzoriensis (Uganda clawed frog).